A 208-amino-acid polypeptide reads, in one-letter code: UPF0711 protein C18orf21 homolog (208 aa).

Positions 123-137 (SKHKSTPGSASKHRT) are enriched in basic residues. 2 disordered regions span residues 123–180 (SKHK…KSSP) and 189–208 (MLENKQQGKKGGLKDFLSSL). The span at 138-152 (PQTVNWATPKSVANR) shows a compositional bias: polar residues. Residues 153–180 (TPSSTPRSASSNTSSSSSSKSSSVKSSP) show a composition bias toward low complexity.

It belongs to the UPF0711 family.

This chain is UPF0711 protein C18orf21 homolog, found in Danio rerio (Zebrafish).